Reading from the N-terminus, the 186-residue chain is dTTP/UTP pyrophosphatase (186 aa).

Aspartate 67 acts as the Proton acceptor in catalysis.

It belongs to the Maf family. YhdE subfamily. It depends on a divalent metal cation as a cofactor.

It localises to the cytoplasm. The enzyme catalyses dTTP + H2O = dTMP + diphosphate + H(+). It carries out the reaction UTP + H2O = UMP + diphosphate + H(+). Functionally, nucleoside triphosphate pyrophosphatase that hydrolyzes dTTP and UTP. May have a dual role in cell division arrest and in preventing the incorporation of modified nucleotides into cellular nucleic acids. The polypeptide is dTTP/UTP pyrophosphatase (Carboxydothermus hydrogenoformans (strain ATCC BAA-161 / DSM 6008 / Z-2901)).